We begin with the raw amino-acid sequence, 831 residues long: Cation/H(+) symporter 13 (831 aa).

Helical transmembrane passes span 50-70 (YALPLLLLQMSVIIVTSRLIF), 89-109 (VVLGPSFLGHNVIYMNMFLPA), 112-132 (KIIIQTLSNVGFVIHLFLLGL), 147-167 (ILIGTASYAFPFSLGNLTIMF), 214-234 (LATHCSMVCEVCSWFVALAFN), 250-270 (MIIGLLLVIYFVFRPIIVWLT), 282-302 (VVPFFPVLLLLSIASLSGEAM), 303-323 (GVHAAFGAFWLGVSLPDGPPL), 334-354 (FASNLFLPCFIAISGLQTNFF), 364-384 (VVMIEIILLITYGCKFLGTAA), 397-417 (LCLAFLMCCQGIIEVYTTIVW), and 430-450 (LVIITILFVTGISRFLVVYLY).

It belongs to the monovalent cation:proton antiporter 2 (CPA2) transporter (TC 2.A.37) family. CHX (TC 2.A.37.4) subfamily. In terms of tissue distribution, preferentially expressed in pollen before and after germination. Detected in pollen grains within anthers of the flower buds or in pollen on fully open flowers and on the stigma, and in pollen tubes growing in the style. Weakly expressed in roots.

Its subcellular location is the cell membrane. Functionally, high-affinity potassium transporter that plays a role in K(+) acquisition. May operate as a K(+)/H(+) symporter. In Arabidopsis thaliana (Mouse-ear cress), this protein is Cation/H(+) symporter 13 (CHX13).